A 493-amino-acid polypeptide reads, in one-letter code: Glutamyl-tRNA(Gln) amidotransferase subunit A (493 aa).

Residues K78 and S159 each act as charge relay system in the active site. Catalysis depends on S183, which acts as the Acyl-ester intermediate.

Belongs to the amidase family. GatA subfamily. In terms of assembly, heterotrimer of A, B and C subunits.

The catalysed reaction is L-glutamyl-tRNA(Gln) + L-glutamine + ATP + H2O = L-glutaminyl-tRNA(Gln) + L-glutamate + ADP + phosphate + H(+). Allows the formation of correctly charged Gln-tRNA(Gln) through the transamidation of misacylated Glu-tRNA(Gln) in organisms which lack glutaminyl-tRNA synthetase. The reaction takes place in the presence of glutamine and ATP through an activated gamma-phospho-Glu-tRNA(Gln). This Sphingopyxis alaskensis (strain DSM 13593 / LMG 18877 / RB2256) (Sphingomonas alaskensis) protein is Glutamyl-tRNA(Gln) amidotransferase subunit A.